An 83-amino-acid chain; its full sequence is Cytotoxin homolog 5V (83 aa).

The signal sequence occupies residues 1–21; sequence MKTLLLTLVVVTIVCLDLGYT. Cystine bridges form between C24-C43, C36-C61, C65-C76, and C77-C82.

Belongs to the three-finger toxin family. Short-chain subfamily. Orphan group XV sub-subfamily. Expressed by the venom gland.

It is found in the secreted. Its subcellular location is the target cell membrane. Has low cytotoxic activity. The chain is Cytotoxin homolog 5V from Naja atra (Chinese cobra).